The primary structure comprises 622 residues: Histone-lysine N-methyltransferase set9 (622 aa).

The SET domain occupies 120 to 234; the sequence is SPFEITTTNR…IGEEITVSYG (115 aa). 4 disordered regions span residues 262-314, 335-394, 427-470, and 576-622; these read VPSE…GKFV, QPAG…TTAT, PTTS…RGKP, and DRGV…RMTM. Residues 265 to 285 are compositionally biased toward polar residues; sequence EPQSKASTPALNDDTLSTDSH. The span at 376–394 shows a compositional bias: low complexity; it reads PPSTAANESERSSTSTTAT. Polar residues-rich tracts occupy residues 427–437 and 446–458; these read PTTSLRSGSTE and DQPS…SIGS. The segment covering 590–607 has biased composition (basic and acidic residues); sequence SEPRTETEGSEGCEDRRT. Residues 608–622 are compositionally biased toward basic residues; that stretch reads TRASRRRTRSLRMTM.

The protein belongs to the class V-like SAM-binding methyltransferase superfamily. Histone-lysine methyltransferase family. Suvar4-20 subfamily.

The protein resides in the nucleus. The protein localises to the chromosome. The enzyme catalyses L-lysyl(20)-[histone H4] + 3 S-adenosyl-L-methionine = N(6),N(6),N(6)-trimethyl-L-lysyl(20)-[histone H4] + 3 S-adenosyl-L-homocysteine + 3 H(+). Functionally, histone methyltransferase that trimethylates 'Lys-20' of histone H4 to form H4K20me3. This is Histone-lysine N-methyltransferase set9 (set9) from Aspergillus fumigatus (strain ATCC MYA-4609 / CBS 101355 / FGSC A1100 / Af293) (Neosartorya fumigata).